The primary structure comprises 257 residues: Cytochrome c oxidase subunit 3 (257 aa).

A run of 6 helical transmembrane segments spans residues 15–35 (PWPLATGMGAFAMTSGLVKWF), 82–102 (GMILFIISEVFFFVSFFWGFF), 124–144 (FLSALLNTSILLASGVTVTWA), 156–176 (CLQGLLFTVLLGLYFSFLQGL), 194–214 (FFLATGFHGLHVLIGTIFLMI), and 235–255 (AWYWHFVDVVWLFLYLSIYWW).

The protein belongs to the cytochrome c oxidase subunit 3 family. In terms of assembly, component of the cytochrome c oxidase (complex IV, CIV), a multisubunit enzyme composed of a catalytic core of 3 subunits and several supernumerary subunits. The complex exists as a monomer or a dimer and forms supercomplexes (SCs) in the inner mitochondrial membrane with ubiquinol-cytochrome c oxidoreductase (cytochrome b-c1 complex, complex III, CIII).

It localises to the mitochondrion inner membrane. The enzyme catalyses 4 Fe(II)-[cytochrome c] + O2 + 8 H(+)(in) = 4 Fe(III)-[cytochrome c] + 2 H2O + 4 H(+)(out). Functionally, component of the cytochrome c oxidase, the last enzyme in the mitochondrial electron transport chain which drives oxidative phosphorylation. The respiratory chain contains 3 multisubunit complexes succinate dehydrogenase (complex II, CII), ubiquinol-cytochrome c oxidoreductase (cytochrome b-c1 complex, complex III, CIII) and cytochrome c oxidase (complex IV, CIV), that cooperate to transfer electrons derived from NADH and succinate to molecular oxygen, creating an electrochemical gradient over the inner membrane that drives transmembrane transport and the ATP synthase. Cytochrome c oxidase is the component of the respiratory chain that catalyzes the reduction of oxygen to water. Electrons originating from reduced cytochrome c in the intermembrane space (IMS) are transferred via the dinuclear copper A center (CU(A)) of subunit 2 and heme A of subunit 1 to the active site in subunit 1, a binuclear center (BNC) formed by heme A3 and copper B (CU(B)). The BNC reduces molecular oxygen to 2 water molecules using 4 electrons from cytochrome c in the IMS and 4 protons from the mitochondrial matrix. This is Cytochrome c oxidase subunit 3 (COIII) from Artemia franciscana (Brine shrimp).